We begin with the raw amino-acid sequence, 159 residues long: Transmembrane protein 42 (159 aa).

4 helical membrane passes run 37 to 57, 68 to 88, 100 to 120, and 124 to 144; these read FWGV…AASA, GFCV…WTFF, IASV…GFVL, and CQEV…TLIH.

The protein localises to the membrane. The protein is Transmembrane protein 42 (TMEM42) of Bos taurus (Bovine).